The chain runs to 479 residues: Poly(A) polymerase catalytic subunit (479 aa).

Active-site residues include aspartate 202 and aspartate 204. Residues aspartate 202, aspartate 204, and aspartate 253 each contribute to the Ca(2+) site.

It belongs to the poxviridae poly(A) polymerase catalytic subunit family. Heterodimer of a large (catalytic) subunit and a small (regulatory) subunit.

It carries out the reaction RNA(n) + ATP = RNA(n)-3'-adenine ribonucleotide + diphosphate. Its function is as follows. Polymerase that creates the 3'-poly(A) tail of mRNA's. This chain is Poly(A) polymerase catalytic subunit (OPG063), found in Bos taurus (Bovine).